The sequence spans 229 residues: Adenosylcobinamide-GDP ribazoletransferase (229 aa).

The next 6 membrane-spanning stretches (helical) occupy residues 31-51 (AMLL…AVLA), 55-75 (AVEL…AASS), 111-131 (AGVL…ATLL), 134-154 (PLLA…VCCT), 176-196 (VAVL…LVLV), and 208-228 (GDVM…AWAA).

Belongs to the CobS family. Requires Mg(2+) as cofactor.

The protein resides in the cell membrane. The enzyme catalyses alpha-ribazole + adenosylcob(III)inamide-GDP = adenosylcob(III)alamin + GMP + H(+). The catalysed reaction is alpha-ribazole 5'-phosphate + adenosylcob(III)inamide-GDP = adenosylcob(III)alamin 5'-phosphate + GMP + H(+). It functions in the pathway cofactor biosynthesis; adenosylcobalamin biosynthesis; adenosylcobalamin from cob(II)yrinate a,c-diamide: step 7/7. Its function is as follows. Joins adenosylcobinamide-GDP and alpha-ribazole to generate adenosylcobalamin (Ado-cobalamin). Also synthesizes adenosylcobalamin 5'-phosphate from adenosylcobinamide-GDP and alpha-ribazole 5'-phosphate. In Nocardioides sp. (strain ATCC BAA-499 / JS614), this protein is Adenosylcobinamide-GDP ribazoletransferase.